Reading from the N-terminus, the 295-residue chain is ATP synthase gamma chain (295 aa).

Belongs to the ATPase gamma chain family. In terms of assembly, F-type ATPases have 2 components, CF(1) - the catalytic core - and CF(0) - the membrane proton channel. CF(1) has five subunits: alpha(3), beta(3), gamma(1), delta(1), epsilon(1). CF(0) has three main subunits: a, b and c.

The protein localises to the cell inner membrane. Functionally, produces ATP from ADP in the presence of a proton gradient across the membrane. The gamma chain is believed to be important in regulating ATPase activity and the flow of protons through the CF(0) complex. The protein is ATP synthase gamma chain of Campylobacter fetus subsp. fetus (strain 82-40).